Here is a 448-residue protein sequence, read N- to C-terminus: Probable rhamnogalacturonase E (448 aa).

Positions 1–22 are cleaved as a signal peptide; that stretch reads MTWSTSFLVATSLLSIINSVHA. A disulfide bond links cysteine 43 and cysteine 69. Asparagine 54, asparagine 92, and asparagine 131 each carry an N-linked (GlcNAc...) asparagine glycan. Residue aspartate 221 is the Proton donor of the active site. Cysteine 223 and cysteine 240 are oxidised to a cystine. N-linked (GlcNAc...) asparagine glycans are attached at residues asparagine 256 and asparagine 284. Histidine 296 is an active-site residue. N-linked (GlcNAc...) asparagine glycans are attached at residues asparagine 323 and asparagine 328. 2 disulfide bridges follow: cysteine 346–cysteine 352 and cysteine 374–cysteine 382.

This sequence belongs to the glycosyl hydrolase 28 family.

Its subcellular location is the secreted. Pectinolytic enzymes consist of four classes of enzymes: pectine lyase, polygalacturonase, pectin methylesterase and rhamnogalacturonase. Hydrolyzes alpha-D-galacturonopyranosyl-(1,2)-alpha-L-rhamnopyranosyl linkages in the backbone of the hairy regions of pectins. In Aspergillus niger (strain ATCC MYA-4892 / CBS 513.88 / FGSC A1513), this protein is Probable rhamnogalacturonase E (rhgE).